A 272-amino-acid polypeptide reads, in one-letter code: Ribosomal RNA small subunit methyltransferase A (272 aa).

S-adenosyl-L-methionine contacts are provided by Asn18, Leu20, Gly45, Glu66, Asp91, and Asn113.

The protein belongs to the class I-like SAM-binding methyltransferase superfamily. rRNA adenine N(6)-methyltransferase family. RsmA subfamily.

It is found in the cytoplasm. The catalysed reaction is adenosine(1518)/adenosine(1519) in 16S rRNA + 4 S-adenosyl-L-methionine = N(6)-dimethyladenosine(1518)/N(6)-dimethyladenosine(1519) in 16S rRNA + 4 S-adenosyl-L-homocysteine + 4 H(+). In terms of biological role, specifically dimethylates two adjacent adenosines (A1518 and A1519) in the loop of a conserved hairpin near the 3'-end of 16S rRNA in the 30S particle. May play a critical role in biogenesis of 30S subunits. The protein is Ribosomal RNA small subunit methyltransferase A of Serratia proteamaculans (strain 568).